The sequence spans 360 residues: Peptide chain release factor 1 (360 aa).

Residue Gln235 is modified to N5-methylglutamine. A disordered region spans residues 285–313 (KRQQAEASTRRNLLGSGDRSDRNRTYNFP).

This sequence belongs to the prokaryotic/mitochondrial release factor family. Methylated by PrmC. Methylation increases the termination efficiency of RF1.

The protein resides in the cytoplasm. Its function is as follows. Peptide chain release factor 1 directs the termination of translation in response to the peptide chain termination codons UAG and UAA. This chain is Peptide chain release factor 1, found in Klebsiella pneumoniae (strain 342).